We begin with the raw amino-acid sequence, 181 residues long: Small ribosomal subunit protein uS4 (181 aa).

An S4 RNA-binding domain is found at 104–172 (RRLQTIVYKK…SRPPVMSQQE (69 aa)).

Belongs to the universal ribosomal protein uS4 family. Part of the 30S ribosomal subunit. Contacts protein S5. The interaction surface between S4 and S5 is involved in control of translational fidelity.

One of the primary rRNA binding proteins, it binds directly to 16S rRNA where it nucleates assembly of the body of the 30S subunit. Functionally, with S5 and S12 plays an important role in translational accuracy. This is Small ribosomal subunit protein uS4 from Saccharolobus solfataricus (strain ATCC 35092 / DSM 1617 / JCM 11322 / P2) (Sulfolobus solfataricus).